Here is a 67-residue protein sequence, read N- to C-terminus: Putative sodium channel alpha-toxin Acra5 (67 aa).

An LCN-type CS-alpha/beta domain is found at Arg-2–Arg-65. 4 disulfides stabilise this stretch: Cys-13-Cys-64, Cys-17-Cys-40, Cys-26-Cys-45, and Cys-30-Cys-47. Position 67 (Arg-67) is a propeptide, removed by a carboxypeptidase.

The protein belongs to the long (4 C-C) scorpion toxin superfamily. Sodium channel inhibitor family. Alpha subfamily. As to expression, expressed by the venom gland.

The protein localises to the secreted. Functionally, alpha toxins bind voltage-independently at site-3 of sodium channels (Nav) and inhibit the inactivation of the activated channels, thereby blocking neuronal transmission. In Androctonus crassicauda (Arabian fat-tailed scorpion), this protein is Putative sodium channel alpha-toxin Acra5.